A 173-amino-acid chain; its full sequence is Adenine phosphoribosyltransferase (173 aa).

The protein belongs to the purine/pyrimidine phosphoribosyltransferase family. In terms of assembly, homodimer.

It localises to the cytoplasm. It catalyses the reaction AMP + diphosphate = 5-phospho-alpha-D-ribose 1-diphosphate + adenine. The protein operates within purine metabolism; AMP biosynthesis via salvage pathway; AMP from adenine: step 1/1. Catalyzes a salvage reaction resulting in the formation of AMP, that is energically less costly than de novo synthesis. The chain is Adenine phosphoribosyltransferase from Macrococcus caseolyticus (strain JCSC5402) (Macrococcoides caseolyticum).